The chain runs to 368 residues: Glutamate 5-kinase 1 (368 aa).

ATP is bound at residue Lys-12. Substrate-binding residues include Ser-52, Asp-135, and Asn-147. ATP-binding positions include Ser-167–Asp-168 and Thr-209–Lys-215. Positions Gln-274–Lys-348 constitute a PUA domain.

This sequence belongs to the glutamate 5-kinase family.

The protein resides in the cytoplasm. The enzyme catalyses L-glutamate + ATP = L-glutamyl 5-phosphate + ADP. Its pathway is amino-acid biosynthesis; L-proline biosynthesis; L-glutamate 5-semialdehyde from L-glutamate: step 1/2. In terms of biological role, catalyzes the transfer of a phosphate group to glutamate to form L-glutamate 5-phosphate. The polypeptide is Glutamate 5-kinase 1 (Pseudoalteromonas translucida (strain TAC 125)).